An 85-amino-acid polypeptide reads, in one-letter code: Large ribosomal subunit protein bL31B (85 aa).

Belongs to the bacterial ribosomal protein bL31 family. Type B subfamily. In terms of assembly, part of the 50S ribosomal subunit.

This chain is Large ribosomal subunit protein bL31B, found in Macrococcus caseolyticus (strain JCSC5402) (Macrococcoides caseolyticum).